Here is a 306-residue protein sequence, read N- to C-terminus: Protoheme IX farnesyltransferase (306 aa).

A run of 9 helical transmembrane segments spans residues L35–L55, L61–V81, L106–V126, L129–L149, I157–G177, A183–L203, E224–P244, F245–F265, and R286–I306.

This sequence belongs to the UbiA prenyltransferase family. Protoheme IX farnesyltransferase subfamily.

It localises to the cell inner membrane. The catalysed reaction is heme b + (2E,6E)-farnesyl diphosphate + H2O = Fe(II)-heme o + diphosphate. Its pathway is porphyrin-containing compound metabolism; heme O biosynthesis; heme O from protoheme: step 1/1. Converts heme B (protoheme IX) to heme O by substitution of the vinyl group on carbon 2 of heme B porphyrin ring with a hydroxyethyl farnesyl side group. This chain is Protoheme IX farnesyltransferase, found in Polaromonas naphthalenivorans (strain CJ2).